The following is a 307-amino-acid chain: UDP-3-O-acyl-N-acetylglucosamine deacetylase (307 aa).

Positions 78, 235, and 239 each coordinate Zn(2+). Histidine 262 acts as the Proton donor in catalysis.

Belongs to the LpxC family. The cofactor is Zn(2+).

It carries out the reaction a UDP-3-O-[(3R)-3-hydroxyacyl]-N-acetyl-alpha-D-glucosamine + H2O = a UDP-3-O-[(3R)-3-hydroxyacyl]-alpha-D-glucosamine + acetate. Its pathway is glycolipid biosynthesis; lipid IV(A) biosynthesis; lipid IV(A) from (3R)-3-hydroxytetradecanoyl-[acyl-carrier-protein] and UDP-N-acetyl-alpha-D-glucosamine: step 2/6. In terms of biological role, catalyzes the hydrolysis of UDP-3-O-myristoyl-N-acetylglucosamine to form UDP-3-O-myristoylglucosamine and acetate, the committed step in lipid A biosynthesis. This is UDP-3-O-acyl-N-acetylglucosamine deacetylase from Geotalea uraniireducens (strain Rf4) (Geobacter uraniireducens).